We begin with the raw amino-acid sequence, 458 residues long: Alpha-glucosides-binding periplasmic protein AglE (458 aa).

A signal peptide spans 1–27 (MKRSLLIGVAAFALLAGTAGLAGTAGA).

The protein belongs to the bacterial solute-binding protein 1 family.

The protein resides in the periplasm. Part of the binding-protein-dependent transport system for alpha-glucosides such as sucrose, maltose and trehalose. This chain is Alpha-glucosides-binding periplasmic protein AglE (aglE), found in Rhizobium meliloti (strain 1021) (Ensifer meliloti).